The chain runs to 272 residues: Shikimate dehydrogenase (NADP(+)) (272 aa).

Residues 14–16 (SKS) and Thr61 contribute to the shikimate site. Catalysis depends on Lys65, which acts as the Proton acceptor. Glu77 contributes to the NADP(+) binding site. Asn86 and Asp102 together coordinate shikimate. NADP(+)-binding positions include 126-130 (GAGGA), 149-154 (NRTVSR), and Met213. Tyr215 contributes to the shikimate binding site. Gly237 is a binding site for NADP(+).

It belongs to the shikimate dehydrogenase family. Homodimer.

The enzyme catalyses shikimate + NADP(+) = 3-dehydroshikimate + NADPH + H(+). The protein operates within metabolic intermediate biosynthesis; chorismate biosynthesis; chorismate from D-erythrose 4-phosphate and phosphoenolpyruvate: step 4/7. Involved in the biosynthesis of the chorismate, which leads to the biosynthesis of aromatic amino acids. Catalyzes the reversible NADPH linked reduction of 3-dehydroshikimate (DHSA) to yield shikimate (SA). The protein is Shikimate dehydrogenase (NADP(+)) of Escherichia coli O6:H1 (strain CFT073 / ATCC 700928 / UPEC).